Consider the following 182-residue polypeptide: Late embryogenesis abundant protein 3 (182 aa).

Positions 1–51 (MAQHQHSPQRPRDQDNTRPHDQYGIVFSVSGDDVARKQGDSFSQPDPTVAT) are disordered. The short motif at 7–11 (SPQRP) is the Nuclear localization signal (NLS) element. Positions 10–21 (RPRDQDNTRPHD) are enriched in basic and acidic residues. SMP domains follow at residues 58-115 (VTIG…TNEQ) and 123-181 (VNIA…LNQQ). The segment at 145–182 (EDAEAVVGAELRSSSEMKTTPGGVADSMSAGARLNQQL) is disordered.

Belongs to the LEA type SMP family.

The protein resides in the cytoplasm. The protein localises to the nucleus. Functionally, LEA proteins are late embryonic proteins abundant in higher plant seed embryos. The function of those proteins is not known. The chain is Late embryogenesis abundant protein 3 from Arabidopsis thaliana (Mouse-ear cress).